Here is a 375-residue protein sequence, read N- to C-terminus: Succinyl-diaminopimelate desuccinylase (375 aa).

Residue histidine 66 participates in Zn(2+) binding. The active site involves aspartate 68. Aspartate 99 is a binding site for Zn(2+). The Proton acceptor role is filled by glutamate 133. Residues glutamate 134, glutamate 162, and histidine 348 each contribute to the Zn(2+) site.

Belongs to the peptidase M20A family. DapE subfamily. In terms of assembly, homodimer. It depends on Zn(2+) as a cofactor. Co(2+) is required as a cofactor.

The enzyme catalyses N-succinyl-(2S,6S)-2,6-diaminopimelate + H2O = (2S,6S)-2,6-diaminopimelate + succinate. It functions in the pathway amino-acid biosynthesis; L-lysine biosynthesis via DAP pathway; LL-2,6-diaminopimelate from (S)-tetrahydrodipicolinate (succinylase route): step 3/3. Catalyzes the hydrolysis of N-succinyl-L,L-diaminopimelic acid (SDAP), forming succinate and LL-2,6-diaminopimelate (DAP), an intermediate involved in the bacterial biosynthesis of lysine and meso-diaminopimelic acid, an essential component of bacterial cell walls. The chain is Succinyl-diaminopimelate desuccinylase from Teredinibacter turnerae (strain ATCC 39867 / T7901).